The primary structure comprises 100 residues: Putative PIN1-like protein (100 aa).

The segment covering 1–15 (MADEEKLPPGWEKRM) has biased composition (basic and acidic residues). Disordered regions lie at residues 1-52 (MADE…QGEP) and 69-100 (LDLA…REGL). The WW domain maps to 5–38 (EKLPPGWEKRMSRPSGRGYYFNHITNPSQWERPS). Polar residues predominate over residues 27–44 (HITNPSQWERPSGNSSSG). The span at 87–100 (QRLHPEDQGRREGL) shows a compositional bias: basic and acidic residues.

The protein is Putative PIN1-like protein (PIN1P1) of Homo sapiens (Human).